Here is a 774-residue protein sequence, read N- to C-terminus: 5-methyltetrahydropteroyltriglutamate--homocysteine methyltransferase (774 aa).

5-methyltetrahydropteroyltri-L-glutamate is bound by residues Arg15–Lys18 and Lys116. Residues Ile445–Ser447 and Glu498 contribute to the L-homocysteine site. L-methionine-binding positions include Ile445–Ser447 and Glu498. 5-methyltetrahydropteroyltri-L-glutamate is bound by residues Arg529–Cys530 and Trp575. An L-homocysteine-binding site is contributed by Asp613. Asp613 serves as a coordination point for L-methionine. Residue Glu619 participates in 5-methyltetrahydropteroyltri-L-glutamate binding. Residues His655, Cys657, and Glu679 each contribute to the Zn(2+) site. His708 serves as the catalytic Proton donor. Cys740 provides a ligand contact to Zn(2+).

It belongs to the vitamin-B12 independent methionine synthase family. Requires Zn(2+) as cofactor.

The enzyme catalyses 5-methyltetrahydropteroyltri-L-glutamate + L-homocysteine = tetrahydropteroyltri-L-glutamate + L-methionine. The protein operates within amino-acid biosynthesis; L-methionine biosynthesis via de novo pathway; L-methionine from L-homocysteine (MetE route): step 1/1. Catalyzes the transfer of a methyl group from 5-methyltetrahydrofolate to homocysteine resulting in methionine formation. This is 5-methyltetrahydropteroyltriglutamate--homocysteine methyltransferase from Flavobacterium johnsoniae (strain ATCC 17061 / DSM 2064 / JCM 8514 / BCRC 14874 / CCUG 350202 / NBRC 14942 / NCIMB 11054 / UW101) (Cytophaga johnsonae).